The sequence spans 1353 residues: Protein timeless homolog (1353 aa).

3 disordered regions span residues 798 to 825 (VAED…EEEV), 1150 to 1291 (KPTR…LEED), and 1306 to 1335 (GGSI…DPFT). Acidic residues predominate over residues 802–825 (RAEDPDEEDPAEPYDSEQEEEEEV). 2 stretches are compositionally biased toward basic and acidic residues: residues 1150 to 1160 (KPTRQVERHLE) and 1168 to 1182 (ERSK…KFDD). Acidic residues-rich tracts occupy residues 1183–1206 (FLND…EEEE) and 1217–1226 (DSEDEEEHIE). Over residues 1227–1239 (QEEAQKKLEKVAE) the composition is skewed to basic and acidic residues. 3 stretches are compositionally biased toward acidic residues: residues 1261–1273 (DSSD…DSAE), 1282–1291 (AEDDSDLEED), and 1323–1332 (EEREDDDDED).

Belongs to the timeless family. Associates with the cohesin complex. Interacts with smc-1, smc-3, scc-1 and scc-3.

Its subcellular location is the nucleus. Plays an important role in chromosome cohesion during both mitosis and meiosis. In prophase of meiosis, it is involved in the formation of the synaptonemal complex (SC) and specifically, in the diplotene and diakinesis phases of prophase, it stabilizes the association of homologous chromosomes during synapsis and sister chromatid cohesion. It regulates cohesin subunits to promote meiotic chromosome cohesion and localizes non-SMC (structural maintenance of chromosome) cohesin subunits to chromatin prior to or during pre-meiotic S phase. Implicated in influencing either the stability or loading of meiotic-specific cohesin subunit, rec8. Controls cell cycle exit and cell fusion to prevent the premature differentiation into adult cells. Specifically, regulates hypodermal seam cell identity. In Caenorhabditis elegans, this protein is Protein timeless homolog.